We begin with the raw amino-acid sequence, 189 residues long: MGDKIFHNLSGKTLVATPHAITKGIYHKSLIYMLSHTEEGAIGLIFNRLVNHIDLKSFFKIKNDEITTPVMVPIYLGGPVEHEKGFFLHSSDYNKNLLLDFQNDLAVSSNLEISEDIAFGKGPKNSLFIVGYTAWKPGQLEEELEKNLWLVMDCNKEFIFADNPESKWHNALKHLGIDEIHFSSQIGNA.

Belongs to the UPF0301 (AlgH) family.

This is UPF0301 protein RF_0044 from Rickettsia felis (strain ATCC VR-1525 / URRWXCal2) (Rickettsia azadi).